The primary structure comprises 183 residues: Apo-citrate lyase phosphoribosyl-dephospho-CoA transferase (183 aa).

The protein belongs to the CitX family.

The catalysed reaction is apo-[citrate lyase ACP] + 2'-(5''-triphospho-alpha-D-ribosyl)-3'-dephospho-CoA = holo-[citrate lyase ACP] + diphosphate. In terms of biological role, transfers 2-(5''-triphosphoribosyl)-3'-dephosphocoenzyme-A on a serine residue to the apo-acyl carrier protein (gamma chain) of the citrate lyase to yield holo-acyl carrier protein. The chain is Apo-citrate lyase phosphoribosyl-dephospho-CoA transferase from Escherichia coli (strain SMS-3-5 / SECEC).